We begin with the raw amino-acid sequence, 81 residues long: Serine/arginine-rich splicing factor 6 (81 aa).

The segment covering 1–48 (RSRSRSRRSSRSRSRSISKSRSRSRSRSKGRSRSRSKGRKSRSKSKSK) has biased composition (basic residues). Residues 1 to 81 (RSRSRSRRSS…SRSRSRSRSP (81 aa)) are disordered. A compositionally biased stretch (basic and acidic residues) spans 62–71 (RSKDEYEKSR). The span at 72-81 (SRSRSRSRSP) shows a compositional bias: basic residues.

Belongs to the splicing factor SR family. In terms of assembly, binds SREK1/SFRS12. Interacts with DYRK1A. Post-translationally, extensively phosphorylated on serine residues in the RS domain. Phosphorylated by DYRK1A, probably in the RS domain. Phosphorylation by DYRK1A modulates alternative splice site selection and inhibits the expression of MAPT/Tau exon 10.

The protein localises to the nucleus. The protein resides in the nucleus speckle. Its function is as follows. Plays a role in constitutive splicing and modulates the selection of alternative splice sites. Plays a role in the alternative splicing of MAPT/Tau exon 10. Binds to alternative exons of TNC pre-mRNA and promotes the expression of alternatively spliced TNC. Plays a role in wound healing and in the regulation of keratinocyte differentiation and proliferation via its role in alternative splicing. The protein is Serine/arginine-rich splicing factor 6 (SRSF6) of Oryctolagus cuniculus (Rabbit).